The following is a 127-amino-acid chain: Holo-[acyl-carrier-protein] synthase (127 aa).

Residues D9 and E58 each contribute to the Mg(2+) site.

It belongs to the P-Pant transferase superfamily. AcpS family. The cofactor is Mg(2+).

The protein localises to the cytoplasm. It carries out the reaction apo-[ACP] + CoA = holo-[ACP] + adenosine 3',5'-bisphosphate + H(+). Transfers the 4'-phosphopantetheine moiety from coenzyme A to a Ser of acyl-carrier-protein. The chain is Holo-[acyl-carrier-protein] synthase from Shewanella sp. (strain W3-18-1).